The sequence spans 116 residues: Iron-sulfur cluster insertion protein ErpA (116 aa).

Residues cysteine 44, cysteine 108, and cysteine 110 each contribute to the iron-sulfur cluster site.

Belongs to the HesB/IscA family. As to quaternary structure, homodimer. Iron-sulfur cluster serves as cofactor.

Its function is as follows. Required for insertion of 4Fe-4S clusters for at least IspG. This is Iron-sulfur cluster insertion protein ErpA from Ectopseudomonas mendocina (strain ymp) (Pseudomonas mendocina).